A 393-amino-acid chain; its full sequence is Ribonucleoside-diphosphate reductase subunit M2 (393 aa).

Phosphoserine is present on serine 18. Residues aspartate 142, glutamate 173, and histidine 176 each contribute to the Fe cation site. Tyrosine 180 is an active-site residue. Fe cation-binding residues include glutamate 236, glutamate 270, and histidine 273.

The protein belongs to the ribonucleoside diphosphate reductase small chain family. Heterodimer of a large and a small subunit. Fe cation serves as cofactor.

The protein resides in the cytoplasm. It catalyses the reaction a 2'-deoxyribonucleoside 5'-diphosphate + [thioredoxin]-disulfide + H2O = a ribonucleoside 5'-diphosphate + [thioredoxin]-dithiol. In terms of biological role, provides the precursors necessary for DNA synthesis. Catalyzes the biosynthesis of deoxyribonucleotides from the corresponding ribonucleotides. The protein is Ribonucleoside-diphosphate reductase subunit M2 (RnrS) of Drosophila melanogaster (Fruit fly).